Here is a 117-residue protein sequence, read N- to C-terminus: Protein Wnt-6 (117 aa).

The O-palmitoleoyl serine; by PORCN moiety is linked to residue serine 1. Cysteine 83 and cysteine 98 are disulfide-bonded. N-linked (GlcNAc...) asparagine glycosylation occurs at asparagine 84.

It belongs to the Wnt family. In terms of processing, palmitoleoylation is required for efficient binding to frizzled receptors. Depalmitoleoylation leads to Wnt signaling pathway inhibition.

It is found in the secreted. It localises to the extracellular space. The protein resides in the extracellular matrix. In terms of biological role, ligand for members of the frizzled family of seven transmembrane receptors. Probable developmental protein. May be a signaling molecule which affects the development of discrete regions of tissues. Is likely to signal over only few cell diameters. The chain is Protein Wnt-6 (WNT-6) from Plethodon jordani (Red-cheeked salamander).